Reading from the N-terminus, the 519-residue chain is Alternative NAD(P)H-ubiquinone oxidoreductase C1, chloroplastic/mitochondrial (519 aa).

The transit peptide at 1–52 (MAVLSSVSSLIPFSYGATRLTSKASLASRTSGFNLSSRWNSTRNSPMLYLSR) directs the protein to the chloroplast and mitochondrion. 82–118 (RVCILGGGFGGLYTALRLESLVWPEDKKPQVVLVDQS) is an FAD binding site. 246-282 (IKVAVVGCGYAGVELAATISERLQDRGIVQSINVSKN) contributes to the NAD(+) binding site.

This sequence belongs to the NADH dehydrogenase family. The cofactor is FAD. In terms of tissue distribution, flowers, roots, leaves and stems.

It is found in the mitochondrion. The protein resides in the mitochondrion inner membrane. The protein localises to the plastid. It localises to the chloroplast. Its subcellular location is the plastoglobule. It catalyses the reaction a quinone + NADH + H(+) = a quinol + NAD(+). It carries out the reaction a ubiquinone + NADH + H(+) = a ubiquinol + NAD(+). The catalysed reaction is demethylphylloquinone + NADPH + H(+) = demethylphylloquinol + NADP(+). Inhibited by dicumarol. Its function is as follows. Bifunctional oxidoreductase ables to act both on prenyl naphthoquinones and on prenyl benzoquinones. May serve a respiratory function. Involved in an electron flow toward the plastoglobule plastoquinone pool. Required for plastochromanol-8 accumulation and for phylloquinone (vitamin K1) production. Probably not directly involved in cyclic or chlororespiratory electron flows under standard growth conditions, but participates in the redox metabolism of plastoquinone-9 and the tocophrol recycling-intermediate alpha-tocopherol quinone. Catalyzes the penultimate step in the biosynthesis of vitamin K1. In Arabidopsis thaliana (Mouse-ear cress), this protein is Alternative NAD(P)H-ubiquinone oxidoreductase C1, chloroplastic/mitochondrial.